The sequence spans 467 residues: Cysteine--tRNA ligase (467 aa).

C29 provides a ligand contact to Zn(2+). Residues 31-41 carry the 'HIGH' region motif; that stretch reads PTVYNYVHIGN. Residues C209, H234, and E238 each coordinate Zn(2+). The short motif at 267 to 271 is the 'KMSKS' region element; the sequence is KMSKS. An ATP-binding site is contributed by K270.

It belongs to the class-I aminoacyl-tRNA synthetase family. Monomer. Requires Zn(2+) as cofactor.

Its subcellular location is the cytoplasm. It catalyses the reaction tRNA(Cys) + L-cysteine + ATP = L-cysteinyl-tRNA(Cys) + AMP + diphosphate. This is Cysteine--tRNA ligase from Xylella fastidiosa (strain 9a5c).